We begin with the raw amino-acid sequence, 396 residues long: Phosphoglycerate kinase (396 aa).

Substrate-binding positions include 21 to 23 (DFN), arginine 36, 59 to 62 (HLGK), arginine 119, and arginine 156. ATP contacts are provided by residues lysine 206, glutamate 325, and 352–355 (GGDS).

Belongs to the phosphoglycerate kinase family. In terms of assembly, monomer.

The protein localises to the cytoplasm. It carries out the reaction (2R)-3-phosphoglycerate + ATP = (2R)-3-phospho-glyceroyl phosphate + ADP. The protein operates within carbohydrate degradation; glycolysis; pyruvate from D-glyceraldehyde 3-phosphate: step 2/5. In Staphylococcus epidermidis (strain ATCC 35984 / DSM 28319 / BCRC 17069 / CCUG 31568 / BM 3577 / RP62A), this protein is Phosphoglycerate kinase.